The following is a 177-amino-acid chain: Arginine metabolism regulation protein I (177 aa).

The span at 1–12 (MTSNSDGSSTSP) shows a compositional bias: polar residues. 2 disordered regions span residues 1–82 (MTSN…TRRK) and 157–177 (NASD…SPAN). The span at 40 to 53 (QDQEGDFDEEDDDD) shows a compositional bias: acidic residues. Over residues 56–67 (SVSTSTPTPTIT) the composition is skewed to low complexity. In terms of domain architecture, MADS-box spans 80-134 (RRKQPIRYIENKTRRHVTFSKRRHGIMKKAYELSVLTGANILLLILANSGLVYTF). The span at 158-177 (ASDTPDATDTSPAQEQSPAN) shows a compositional bias: polar residues.

In terms of assembly, interacts with ARG81 and ARG82.

It is found in the nucleus. Functionally, with ARG81, ARG82 and MCM1, coordinates the expression of arginine anabolic and catabolic genes in response to arginine. This chain is Arginine metabolism regulation protein I (ARG80), found in Saccharomyces cerevisiae (strain ATCC 204508 / S288c) (Baker's yeast).